The following is a 114-amino-acid chain: Large ribosomal subunit protein P2 (114 aa).

The segment covering 76-91 has biased composition (low complexity); sequence PAAAAAAGGGDSSSAA. Positions 76–114 are disordered; sequence PAAAAAAGGGDSSSAAKETKKEEPEEEEEDGDMGLSLFD.

Belongs to the eukaryotic ribosomal protein P1/P2 family. P1 and P2 exist as dimers at the large ribosomal subunit. Post-translationally, phosphorylated.

Plays an important role in the elongation step of protein synthesis. The sequence is that of Large ribosomal subunit protein P2 from Eimeria tenella (Coccidian parasite).